Reading from the N-terminus, the 255-residue chain is MISKFGSVHILAVVAIQLLIIPSVSSLNLTNAYLHHKCNNTEGKYSHGSAFEKYINLALRAIDSDNYLNGFAYIERGEDPNKVFVMYQCRGDSYGSKCKSCISAAISGLRRRCPKSKGAVIWYDQCLFEISTINSFNKIDYENDFYLSNPNDVNDKELFNKETSALLEELTNKATDKNNMIGNKFVLYAAGDKRIGTKNVYAMVQCTKDLVTTTSAACFEWIFKMFSKCCEGKQGGRVLGTSCNFRYELYPFLRN.

The signal sequence occupies residues 1–26; sequence MISKFGSVHILAVVAIQLLIIPSVSS. 2 consecutive Gnk2-homologous domains span residues 33-135 and 141-252; these read YLHH…TINS and YEND…LYPF.

Belongs to the cysteine-rich repeat secretory protein family.

Its subcellular location is the secreted. The sequence is that of Putative cysteine-rich repeat secretory protein 27 (CRRSP27) from Arabidopsis thaliana (Mouse-ear cress).